The sequence spans 458 residues: MWSEGRYEYERIPRERAPPRSHPSDGYNRLVNIVPKKPPLLDRPGEGSYNRYYSHVDYRDYDEGRSFSHDRRSGPPHRGDESGYRWTRDDHSASRQPEYRDMRDGFRRKSFYSSHYARERSPYKRDNTFFRESPVGRKDSPHSRSGSSVSSRSYSPERSKSYSFHQSQHRKSVRPGASYKRQNEGNPERDKERPVQSLKTSRDTSPSSGSAVSSSKVLDKPSRLTEKELAEAASKWAAEKLEKSDESNLPEISEYEAGSTAPLFTDQPEEPESNTTHGIELFEDSQLTTRSKAIASKTKEIEQVYRQDCETFGMVVKMLIEKDPSLEKSIQFALRQNLHEIESAGQTWQQVPPVRNTEMDHDGTPENEGEETAQSAPQPPQAPQPLQPRKKRVRRTTQLRRTTGAPDITWGMLKKTTQEAERILLRTQTPFTPENLFLAMLSVVHCNSRKDVKPENKQ.

Composition is skewed to basic and acidic residues over residues 1-18 and 63-107; these read MWSEGRYEYERIPRERAP and EGRS…DGFR. Disordered regions lie at residues 1–51 and 63–284; these read MWSE…SYNR and EGRS…LFED. A Nuclear localization signal motif is present at residues 103–109; it reads RDGFRRK. Lysine 109 is covalently cross-linked (Glycyl lysine isopeptide (Lys-Gly) (interchain with G-Cter in SUMO2)). Serine 110, serine 114, serine 133, and serine 140 each carry phosphoserine. The segment covering 116–142 has biased composition (basic and acidic residues); the sequence is YARERSPYKRDNTFFRESPVGRKDSPH. The span at 143-154 shows a compositional bias: low complexity; sequence SRSGSSVSSRSY. Lysine 160 is covalently cross-linked (Glycyl lysine isopeptide (Lys-Gly) (interchain with G-Cter in SUMO2)). 2 positions are modified to phosphoserine: serine 161 and serine 167. Lysine 180 participates in a covalent cross-link: Glycyl lysine isopeptide (Lys-Gly) (interchain with G-Cter in SUMO2). Positions 181–194 are enriched in basic and acidic residues; sequence RQNEGNPERDKERP. Phosphoserine is present on serine 197. Lysine 199 is covalently cross-linked (Glycyl lysine isopeptide (Lys-Gly) (interchain with G-Cter in SUMO2)). 2 positions are modified to phosphoserine: serine 201 and serine 205. Residues 205–215 are compositionally biased toward low complexity; it reads SPSSGSAVSSS. The span at 217–230 shows a compositional bias: basic and acidic residues; that stretch reads VLDKPSRLTEKELA. Lysine 227 is covalently cross-linked (Glycyl lysine isopeptide (Lys-Gly) (interchain with G-Cter in SUMO2)). 2 positions are modified to N6-acetyllysine; alternate: lysine 235 and lysine 240. Residues lysine 235 and lysine 240 each participate in a glycyl lysine isopeptide (Lys-Gly) (interchain with G-Cter in SUMO2); alternate cross-link. Residues 237 to 246 show a composition bias toward basic and acidic residues; it reads AAEKLEKSDE. The residue at position 325 (serine 325) is a Phosphoserine. Residue lysine 328 forms a Glycyl lysine isopeptide (Lys-Gly) (interchain with G-Cter in SUMO2) linkage. Residues 345–406 are disordered; that stretch reads GQTWQQVPPV…TQLRRTTGAP (62 aa). Pro residues predominate over residues 377-386; the sequence is PQPPQAPQPL. Positions 388–398 are enriched in basic residues; the sequence is PRKKRVRRTTQ. A Glycyl lysine isopeptide (Lys-Gly) (interchain with G-Cter in SUMO2) cross-link involves residue lysine 453.

Homodimer. Component of the HUSH complex; at least composed of TASOR, PPHLN1 and MPHOSPH8. Interacts with SIN3A and HDAC1. May interact with PPL. Post-translationally, substrate of transglutaminase (in vitro). In terms of tissue distribution, ubiquitous.

It localises to the nucleus. It is found in the cytoplasm. The protein resides in the chromosome. Component of the HUSH complex, a multiprotein complex that mediates epigenetic repression. The HUSH complex is recruited to genomic loci rich in H3K9me3 and is probably required to maintain transcriptional silencing by promoting recruitment of SETDB1, a histone methyltransferase that mediates further deposition of H3K9me3. In the HUSH complex, contributes to the maintenance of the complex at chromatin. Acts as a transcriptional corepressor and regulates the cell cycle, probably via the HUSH complex. The HUSH complex is also involved in the silencing of unintegrated retroviral DNA: some part of the retroviral DNA formed immediately after infection remains unintegrated in the host genome and is transcriptionally repressed. May be involved in epithelial differentiation by contributing to epidermal integrity and barrier formation. The chain is Periphilin-1 from Homo sapiens (Human).